Here is a 356-residue protein sequence, read N- to C-terminus: Phosphate acyltransferase (356 aa).

This sequence belongs to the PlsX family. In terms of assembly, homodimer. Probably interacts with PlsY.

It is found in the cytoplasm. It catalyses the reaction a fatty acyl-[ACP] + phosphate = an acyl phosphate + holo-[ACP]. The protein operates within lipid metabolism; phospholipid metabolism. Catalyzes the reversible formation of acyl-phosphate (acyl-PO(4)) from acyl-[acyl-carrier-protein] (acyl-ACP). This enzyme utilizes acyl-ACP as fatty acyl donor, but not acyl-CoA. In Shigella boydii serotype 4 (strain Sb227), this protein is Phosphate acyltransferase.